The primary structure comprises 343 residues: Ribosomal RNA small subunit methyltransferase H (343 aa).

S-adenosyl-L-methionine is bound by residues 39–41, Asp-58, Phe-87, Asp-108, and Gln-115; that span reads AGH.

This sequence belongs to the methyltransferase superfamily. RsmH family.

Its subcellular location is the cytoplasm. It catalyses the reaction cytidine(1402) in 16S rRNA + S-adenosyl-L-methionine = N(4)-methylcytidine(1402) in 16S rRNA + S-adenosyl-L-homocysteine + H(+). Its function is as follows. Specifically methylates the N4 position of cytidine in position 1402 (C1402) of 16S rRNA. This Bifidobacterium adolescentis (strain ATCC 15703 / DSM 20083 / NCTC 11814 / E194a) protein is Ribosomal RNA small subunit methyltransferase H.